A 306-amino-acid chain; its full sequence is SDS degradation transcriptional activation protein (306 aa).

One can recognise an HTH lysR-type domain in the interval 1 to 59 (MNDLRQLRHFVALAEHGHFARAAEAVNLSQPALSRSIQALENGLGCRLLDRGPRQVSLT). Residues 19 to 38 (FARAAEAVNLSQPALSRSIQ) constitute a DNA-binding region (H-T-H motif).

It belongs to the LysR transcriptional regulatory family.

Functionally, activates the transcription of the sdsA gene for sodium dodecyl sulfate (SDS) degradation. This Pseudomonas sp. (strain ATCC 19151) protein is SDS degradation transcriptional activation protein (sdsB).